A 353-amino-acid polypeptide reads, in one-letter code: Quinolinate synthase (353 aa).

Iminosuccinate contacts are provided by His47 and Ser68. Position 113 (Cys113) interacts with [4Fe-4S] cluster. Residues 139 to 141 (YAN) and Ser156 contribute to the iminosuccinate site. Cys200 contributes to the [4Fe-4S] cluster binding site. Residues 226–228 (HPE) and Thr243 contribute to the iminosuccinate site. Cys297 lines the [4Fe-4S] cluster pocket.

It belongs to the quinolinate synthase family. Type 1 subfamily. The cofactor is [4Fe-4S] cluster.

It is found in the cytoplasm. The catalysed reaction is iminosuccinate + dihydroxyacetone phosphate = quinolinate + phosphate + 2 H2O + H(+). It functions in the pathway cofactor biosynthesis; NAD(+) biosynthesis; quinolinate from iminoaspartate: step 1/1. Its function is as follows. Catalyzes the condensation of iminoaspartate with dihydroxyacetone phosphate to form quinolinate. The protein is Quinolinate synthase of Vibrio parahaemolyticus serotype O3:K6 (strain RIMD 2210633).